The chain runs to 241 residues: 3-deoxy-D-manno-octulosonic acid kinase (241 aa).

Asp171 is an active-site residue.

Belongs to the protein kinase superfamily. KdkA/RfaP family.

Its subcellular location is the cell inner membrane. The enzyme catalyses an alpha-Kdo-(2-&gt;6)-lipid IVA + ATP = a 4-O-phospho-alpha-Kdo-(2-&gt;6)-lipid IVA + ADP + H(+). It functions in the pathway bacterial outer membrane biogenesis; LPS core biosynthesis. Its function is as follows. Catalyzes the ATP-dependent phosphorylation of the 3-deoxy-D-manno-octulosonic acid (Kdo) residue in Kdo-lipid IV(A) at the 4-OH position. This Haemophilus influenzae (strain 86-028NP) protein is 3-deoxy-D-manno-octulosonic acid kinase.